We begin with the raw amino-acid sequence, 1140 residues long: Squamosa promoter-binding-like protein 15 (1140 aa).

Disordered regions lie at residues 73-112 (RVNA…LNLQ) and 124-177 (DVSP…GGNS). 2 stretches are compositionally biased toward low complexity: residues 76-100 (AGLS…EALR) and 125-135 (VSPAATTVSSS). Over residues 164–177 (ASGGGGGGGGGGNS) the composition is skewed to gly residues. The SBP-type zinc finger occupies 184–261 (YPMCQVDDCR…AGHNRRRRKT (78 aa)). Zn(2+) is bound by residues Cys187, Cys192, Cys209, His212, Cys228, Cys231, His235, and Cys247. Positions 244–260 (KRSCRRRLAGHNRRRRK) match the Bipartite nuclear localization signal motif. 4 disordered regions span residues 327-382 (NNGN…ADGF), 403-472 (TSNP…TPPY), 496-517 (LSSE…PVTH), and 558-597 (KDSE…DGQD). A compositionally biased stretch (polar residues) spans 345-375 (ASHSQQQDSVQRTTNGFEKQTNGLDKQTNGF). The span at 403 to 430 (TSNPDSNTSQSQGSSDSSGNNKSKSQST) shows a compositional bias: low complexity. Positions 450-466 (RKNDALERSPEMYKQPD) are enriched in basic and acidic residues. Over residues 496 to 514 (LSSESSNPLDERSPSSSPP) the composition is skewed to polar residues. A compositionally biased stretch (low complexity) spans 579 to 593 (TSTSCSDHSPSTSNS).

As to expression, expressed in stems, leaf sheaths, and young panicles.

The protein resides in the nucleus. Its function is as follows. Trans-acting factor that binds specifically to the consensus nucleotide sequence 5'-TNCGTACAA-3'. The sequence is that of Squamosa promoter-binding-like protein 15 (SPL15) from Oryza sativa subsp. indica (Rice).